Here is a 475-residue protein sequence, read N- to C-terminus: Ankyrin repeat, SAM and basic leucine zipper domain-containing protein 1 (475 aa).

The tract at residues 1–24 (MAGSLGNLVVAGGGESSDSEEDYW) is disordered. Phosphoserine is present on residues serine 16, serine 17, and serine 19. ANK repeat units lie at residues 44–73 (ERDETFKKALTSGDVSLVEELLNSGMSVES), 77–106 (FGWTPLMCAVNIANVELVRILLDRGANASF), 109–146 (DQYTILMAACAAHASESQILKTVELLLSRNANPNVACR), 147–176 (KCMTPVMYAAREGHAQVVALLVAHGAEINA), 180–209 (NGYTALTWAARHGHKSVVLKLLELGANKTI), and 213–242 (DGKTAGEIAKRNKHPELFTLLSLTVNPLQG). The 64-residue stretch at 273 to 336 (TAFGDLEVFL…LDAVKELQVE (64 aa)) folds into the SAM domain.

Interacts with DDX4, PIWIL1, RANBP9 and TDRD1.

Its subcellular location is the cytoplasm. Plays a central role during spermatogenesis by repressing transposable elements and preventing their mobilization, which is essential for the germline integrity. Acts via the piRNA metabolic process, which mediates the repression of transposable elements during meiosis by forming complexes composed of piRNAs and Piwi proteins and governs the methylation and subsequent repression of transposons. Its association with pi-bodies suggests a participation in the primary piRNAs metabolic process. Required prior to the pachytene stage to facilitate the production of multiple types of piRNAs, including those associated with repeats involved in the regulation of retrotransposons. May act by mediating protein-protein interactions during germ cell maturation. The polypeptide is Ankyrin repeat, SAM and basic leucine zipper domain-containing protein 1 (ASZ1) (Notamacropus eugenii (Tammar wallaby)).